We begin with the raw amino-acid sequence, 130 residues long: Large ribosomal subunit protein bL12 (130 aa).

This sequence belongs to the bacterial ribosomal protein bL12 family. As to quaternary structure, homodimer. Part of the ribosomal stalk of the 50S ribosomal subunit. Forms a multimeric L10(L12)X complex, where L10 forms an elongated spine to which 2 to 4 L12 dimers bind in a sequential fashion. Binds GTP-bound translation factors.

In terms of biological role, forms part of the ribosomal stalk which helps the ribosome interact with GTP-bound translation factors. Is thus essential for accurate translation. In Yersinia pestis bv. Antiqua (strain Angola), this protein is Large ribosomal subunit protein bL12.